The primary structure comprises 269 residues: Phosphatidylglycerol--prolipoprotein diacylglyceryl transferase (269 aa).

The next 7 membrane-spanning stretches (helical) occupy residues 17-37, 59-79, 95-115, 123-143, 181-201, 206-226, and 242-262; these read IGPIAIRWYALAYIAGLMLGW, FLVWATMGVVLGGRLGYVLFY, WQGGMSFHGGALGVIVGIIAF, LFQVGDVICCAVPIGLFFGRI, AGLEGAVLFLVLFGLWRLTGI, GALSGVFLAGYGLARIASEFF, and MGQLLSIPQVLVGLALLAWAL. Arginine 142 contributes to the a 1,2-diacyl-sn-glycero-3-phospho-(1'-sn-glycerol) binding site.

This sequence belongs to the Lgt family.

The protein resides in the cell inner membrane. The catalysed reaction is L-cysteinyl-[prolipoprotein] + a 1,2-diacyl-sn-glycero-3-phospho-(1'-sn-glycerol) = an S-1,2-diacyl-sn-glyceryl-L-cysteinyl-[prolipoprotein] + sn-glycerol 1-phosphate + H(+). Its pathway is protein modification; lipoprotein biosynthesis (diacylglyceryl transfer). In terms of biological role, catalyzes the transfer of the diacylglyceryl group from phosphatidylglycerol to the sulfhydryl group of the N-terminal cysteine of a prolipoprotein, the first step in the formation of mature lipoproteins. The polypeptide is Phosphatidylglycerol--prolipoprotein diacylglyceryl transferase (Paramagnetospirillum magneticum (strain ATCC 700264 / AMB-1) (Magnetospirillum magneticum)).